The chain runs to 143 residues: Transcriptional regulator MraZ (143 aa).

2 consecutive SpoVT-AbrB domains span residues 5 to 47 and 76 to 119; these read EYQH…PLNE and ATEC…SDER.

It belongs to the MraZ family. As to quaternary structure, forms oligomers.

The protein localises to the cytoplasm. It is found in the nucleoid. The polypeptide is Transcriptional regulator MraZ (Enterococcus faecalis (strain ATCC 700802 / V583)).